The sequence spans 922 residues: Hexokinase-3 (922 aa).

The disordered stretch occupies residues Met-1 to Val-23. Hexokinase domains follow at residues Arg-25–Ala-469 and Ala-475–Ala-911. Residues His-82–Val-218 form a hexokinase small subdomain 1 region. Residue Glu-93–Ser-100 coordinates ATP. Residue Glu-93–Arg-102 coordinates D-glucose 6-phosphate. Residues Ser-166, Thr-183–Lys-184, and Asn-219–Asp-220 contribute to the D-glucose site. The segment at Asn-219–Asp-458 is hexokinase large subdomain 1. Positions 220 and 243 each coordinate D-glucose 6-phosphate. Residues Asn-246, Glu-271, and Gln-302–Glu-305 contribute to the D-glucose site. Gly-424–Arg-426 is a binding site for D-glucose 6-phosphate. Residues Arg-436 to Ile-437 and Asp-540 to Asn-545 contribute to the ATP site. The segment at Asp-529–Val-660 is hexokinase small subdomain 2. Asp-540–Thr-544 provides a ligand contact to D-glucose 6-phosphate. D-glucose is bound by residues Ser-608–Phe-609, Thr-625–Lys-626, and Asn-661–Asp-662. Positions Asn-661 to Asp-900 are hexokinase large subdomain 2. The D-glucose 6-phosphate site is built by Asp-662 and Thr-685. Thr-685 is an ATP binding site. D-glucose contacts are provided by residues Thr-687 to Asn-688, Glu-713, and Glu-747. Residues Gly-752–Met-753, Thr-789–Ser-793, and Thr-868–Leu-872 contribute to the ATP site. D-glucose 6-phosphate is bound by residues Asp-866–Thr-868 and Ser-902.

The protein belongs to the hexokinase family.

The enzyme catalyses a D-hexose + ATP = a D-hexose 6-phosphate + ADP + H(+). It carries out the reaction D-fructose + ATP = D-fructose 6-phosphate + ADP + H(+). The catalysed reaction is D-glucose + ATP = D-glucose 6-phosphate + ADP + H(+). The protein operates within carbohydrate metabolism; hexose metabolism. It functions in the pathway carbohydrate degradation; glycolysis; D-glyceraldehyde 3-phosphate and glycerone phosphate from D-glucose: step 1/4. Hexokinase is an allosteric enzyme inhibited by its product D-glucose 6-phosphate. Its function is as follows. Catalyzes the phosphorylation of hexose, such as D-glucose and D-fructose, to hexose 6-phosphate (D-glucose 6-phosphate and D-fructose 6-phosphate, respectively). Mediates the initial step of glycolysis by catalyzing phosphorylation of D-glucose to D-glucose 6-phosphate. The sequence is that of Hexokinase-3 from Mus musculus (Mouse).